A 558-amino-acid polypeptide reads, in one-letter code: Formate--tetrahydrofolate ligase (558 aa).

66–73 (TPAGEGKT) provides a ligand contact to ATP.

This sequence belongs to the formate--tetrahydrofolate ligase family.

It catalyses the reaction (6S)-5,6,7,8-tetrahydrofolate + formate + ATP = (6R)-10-formyltetrahydrofolate + ADP + phosphate. Its pathway is one-carbon metabolism; tetrahydrofolate interconversion. The chain is Formate--tetrahydrofolate ligase from Neisseria gonorrhoeae (strain NCCP11945).